The sequence spans 179 residues: Large ribosomal subunit protein uL5 (179 aa).

The protein belongs to the universal ribosomal protein uL5 family. Part of the 50S ribosomal subunit; part of the 5S rRNA/L5/L18/L25 subcomplex. Contacts the 5S rRNA and the P site tRNA. Forms a bridge to the 30S subunit in the 70S ribosome.

This is one of the proteins that bind and probably mediate the attachment of the 5S RNA into the large ribosomal subunit, where it forms part of the central protuberance. In the 70S ribosome it contacts protein S13 of the 30S subunit (bridge B1b), connecting the 2 subunits; this bridge is implicated in subunit movement. Contacts the P site tRNA; the 5S rRNA and some of its associated proteins might help stabilize positioning of ribosome-bound tRNAs. This chain is Large ribosomal subunit protein uL5, found in Pseudomonas fluorescens (strain SBW25).